Consider the following 255-residue polypeptide: Ornithine decarboxylase antizyme (255 aa).

The protein belongs to the ODC antizyme family. As to quaternary structure, interacts with ODC and thereby sterically blocks ODC homodimerization.

Ornithine decarboxylase (ODC) antizyme protein that negatively regulates ODC activity and intracellular polyamine biosynthesis in response to increased intracellular polyamine levels. Binds to ODC monomers, inhibiting the assembly of the functional ODC homodimer, and targets the monomers for ubiquitin-independent proteolytic destruction by the 26S proteasome. The sequence is that of Ornithine decarboxylase antizyme (OAZ1) from Eremothecium gossypii (strain ATCC 10895 / CBS 109.51 / FGSC 9923 / NRRL Y-1056) (Yeast).